The primary structure comprises 134 residues: Cerato-platanin (134 aa).

Residues 1–14 (MKFSILPMIASAMA) form the signal peptide. The tract at residues 18-20 (SYD) is binding of oligomers of N-acetylglucosamine (GlcNAc). Binding of N-acetylglucosamine tetramer (GlcNAc-4) regions lie at residues 31–43 (SVAC…GLMA), 65–68 (GWDS), and 91–95 (DSGRG). 2 cysteine pairs are disulfide-bonded: cysteine 34–cysteine 71 and cysteine 74–cysteine 129. A binding of oligomers of N-acetylglucosamine (GlcNAc) region spans residues 113–116 (AGRV).

It belongs to the cerato-platanin family. As to quaternary structure, monomer.

The protein localises to the secreted. Its subcellular location is the cell wall. Functionally, phytotoxin which causes production of phytoalexin in platanus acerifolia, platanus occidentalis and platanus orientalis. Induces cell necrosis in tobacco leaves, and in callus cells and leaves of P.acerifolia. Induces reactive oxygen species (ROS) synthesis, nitric oxide (NO) production and mitogen-activated protein kinases (MAPKs) phosphorylation in the leaves of A.thaliana and P.acerifolia. Results in H(2)O(2) production on the epidermis around the stomata, rapid closure of the stomata, reduced photosynthetic and CO(2) assimilation rate, and an increase in a number of volatile organic compound (VOC) emission in A.thaliana leaves. Induces overexpression of genes related to salicylic acid- and ethylene-signaling, camalexin synthesis, ROS production and oxidative stress, and genes of various receptor kinases, and down-regulation of a number of jasmonic acid (JA)-signaling genes in A.thaliana leaves. Renders resistance against C.platani in A.thaliana and P.acerifolia. Renders localised resistance of A.thaliana against infection by virulent foliar pathogens B.cinerea and P.syringae pv. tomato. Binds cellulose analog carboxymethyl cellulose (CMC). Expansin-like protein with probable fungal and plant cell wall loosening activity based on its non-enzymatic cellulose weakening activity in vitro. Increases glucose production by cellulase after pre-incubation of cellulose with this protein. In contrast, according to PubMed:23512479, no synergistic effect with cellulases. May have a structural role in the fungal cell wall based on its ability to bind chitin, but does not bind beta-1,3-glucan. This is Cerato-platanin from Ceratocystis fimbriata f. sp. platani.